We begin with the raw amino-acid sequence, 81 residues long: Sulfur carrier protein TusA (81 aa).

Cysteine 19 acts as the Cysteine persulfide intermediate in catalysis.

The protein belongs to the sulfur carrier protein TusA family. Interacts with IscS.

The protein localises to the cytoplasm. It participates in tRNA modification. Sulfur carrier protein involved in sulfur trafficking in the cell. Part of a sulfur-relay system required for 2-thiolation during synthesis of 2-thiouridine of the modified wobble base 5-methylaminomethyl-2-thiouridine (mnm(5)s(2)U) in tRNA. Interacts with IscS and stimulates its cysteine desulfurase activity. Accepts an activated sulfur from IscS, which is then transferred to TusD, and thus determines the direction of sulfur flow from IscS to 2-thiouridine formation. Also appears to be involved in sulfur transfer for the biosynthesis of molybdopterin. The sequence is that of Sulfur carrier protein TusA from Enterobacter sp. (strain 638).